The chain runs to 432 residues: Adenylosuccinate synthetase (432 aa).

GTP is bound by residues 13 to 19 (GDEGKGK) and 41 to 43 (GHT). Residue D14 is the Proton acceptor of the active site. The Mg(2+) site is built by D14 and G41. IMP is bound by residues 14-17 (DEGK), 39-42 (NAGH), T130, R144, Q225, T240, and R304. The active-site Proton donor is H42. 300–306 (AVTGRPR) is a substrate binding site. Residues R306, 332–334 (KLD), and 415–417 (STG) contribute to the GTP site.

The protein belongs to the adenylosuccinate synthetase family. Homodimer. Requires Mg(2+) as cofactor.

It localises to the cytoplasm. It catalyses the reaction IMP + L-aspartate + GTP = N(6)-(1,2-dicarboxyethyl)-AMP + GDP + phosphate + 2 H(+). The protein operates within purine metabolism; AMP biosynthesis via de novo pathway; AMP from IMP: step 1/2. In terms of biological role, plays an important role in the de novo pathway of purine nucleotide biosynthesis. Catalyzes the first committed step in the biosynthesis of AMP from IMP. This is Adenylosuccinate synthetase from Haemophilus influenzae (strain PittEE).